The sequence spans 2368 residues: Voltage-dependent P/Q-type calcium channel subunit alpha-1A (2368 aa).

Topologically, residues 1-100 are cytoplasmic; sequence MARFGDEMPG…KYAKKITEWP (100 aa). One copy of the I repeat lies at 65 to 365; that stretch reads NPIPVRQNCL…LVLGVLSGEF (301 aa). A helical transmembrane segment spans residues 101–119; it reads PFEYMILATIIANCIVLAL. Residues 120 to 138 are Extracellular-facing; it reads EQHLPDDDKTPMSERLDDT. A helical transmembrane segment spans residues 139–156; that stretch reads EPYFIGIFCFEAGIKIVA. Over 157-168 the chain is Cytoplasmic; that stretch reads LGFAFHKGSYLR. The helical transmembrane segment at 169–184 threads the bilayer; that stretch reads NGWNVMDFVVVLTGIL. Residues 185 to 192 are Extracellular-facing; it reads ATVGTEFD. Residues 193-211 form a helical membrane-spanning segment; that stretch reads LRTLRAVRVLRPLKLVSGI. The Cytoplasmic portion of the chain corresponds to 212–230; sequence PSLQVVLKSIMKAMIPLLQ. The chain crosses the membrane as a helical span at residues 231-250; that stretch reads IGLLLFFAILIFAIIGLEFY. Topologically, residues 251–337 are extracellular; the sequence is MGKFHTTCFE…NSNDASGNTW (87 aa). Residue Asn285 is glycosylated (N-linked (GlcNAc...) asparagine). Glu320 contacts Ca(2+). The helical transmembrane segment at 338–362 threads the bilayer; it reads NWLYFIPLIIIGSFFMLNLVLGVLS. At 363–489 the chain is on the cytoplasmic side; it reads GEFAKERERV…FYIRRMVKTQ (127 aa). Residues 385–402 are binding to the beta subunit; that stretch reads QQIERELNGYMEWISKAE. A Phosphothreonine modification is found at Thr411. A phosphoserine mark is found at Ser450 and Ser453. Residues 475 to 719 form an II repeat; sequence ERRMRFYIRR…VFLAIAVDNL (245 aa). A helical transmembrane segment spans residues 490-509; sequence AFYWTVLSLVALNTLCVAIV. The Extracellular portion of the chain corresponds to 510-523; the sequence is HYNQPEWLSDFLYY. A helical transmembrane segment spans residues 524–543; the sequence is AEFIFLGLFMSEMFIKMYGL. Residues 544–551 are Cytoplasmic-facing; it reads GTRPYFHS. The chain crosses the membrane as a helical span at residues 552–570; that stretch reads SFNCFDCGVIIGSIFEVIW. The Extracellular segment spans residues 571–580; the sequence is AVIKPGTSFG. Residues 581–599 form a helical membrane-spanning segment; that stretch reads ISVLRALRLLRIFKVTKYW. Residues 600 to 618 lie on the Cytoplasmic side of the membrane; that stretch reads ASLRNLVVSLLNSMKSIIS. A helical membrane pass occupies residues 619–638; sequence LLFLLFLFIVVFALLGMQLF. The Extracellular segment spans residues 639-691; the sequence is GGQFNFDEGTPPTNFDTFPAAIMTVFQILTGEDWNEVMYDGIKSQGGVQGGMV. A Ca(2+)-binding site is contributed by Glu670. A helical transmembrane segment spans residues 692-716; that stretch reads FSIYFIVLTLFGNYTLLNVFLAIAV. Residues 717 to 1190 lie on the Cytoplasmic side of the membrane; sequence DNLANAQELT…TNPLRRLCHY (474 aa). Residues Ser752 and Ser755 each carry the phosphoserine modification. Residues 762 to 781 form a disordered region; the sequence is AVKEQQKNQKPTKSVWEQRT. Residues 769 to 779 show a composition bias toward polar residues; it reads NQKPTKSVWEQ. Position 792 is a phosphoserine (Ser792). Disordered stretches follow at residues 823–1117 and 1137–1170; these read PLVV…RKPE and VNKNANPDPLPKKEEEKKEEEEADPGEDGPKPMP. Basic and acidic residues-rich tracts occupy residues 850 to 862, 871 to 924, and 932 to 958; these read RPRESARDPDARR, APGR…EGEP, and RPGDEPDDRPERRPRPRDATRPARAAD. Residues Ser1038, Ser1042, and Ser1051 each carry the phosphoserine modification. Residues 1056–1073 show a composition bias toward polar residues; that stretch reads GNSTNPGPALATNPQNAA. Over residues 1074–1083 the composition is skewed to low complexity; it reads SRRTPNNPGN. Over residues 1094–1111 the composition is skewed to polar residues; sequence ENSLIVTNPSSTQPNSAK. Residues 1153-1163 show a composition bias toward acidic residues; the sequence is KKEEEEADPGE. Residues 1182-1465 form an III repeat; that stretch reads NPLRRLCHYI…IFVALIIITF (284 aa). Residues 1191 to 1214 form a helical membrane-spanning segment; sequence ILNLRYFEMCILMVIAMSSIALAA. At 1215 to 1231 the chain is on the extracellular side; sequence EDPVQPNAPRNNVLRYF. Residues 1232–1251 traverse the membrane as a helical segment; the sequence is DYVFTGVFTFEMVIKMIDLG. Over 1252–1258 the chain is Cytoplasmic; it reads LVLHQGA. A helical membrane pass occupies residues 1259–1282; it reads YFRDLWNILDFIVVSGALVAFAFT. The Extracellular segment spans residues 1283 to 1293; it reads GNSKGKDINTI. The chain crosses the membrane as a helical span at residues 1294–1311; the sequence is KSLRVLRVLRPLKTIKRL. Topologically, residues 1312 to 1330 are cytoplasmic; that stretch reads PKLKAVFDCVVNSLKNVFN. Residues 1331–1350 traverse the membrane as a helical segment; the sequence is ILIVYMLFMFIFAVVAVQLF. At 1351 to 1437 the chain is on the extracellular side; the sequence is KGKFFHCTDE…QGPSPGYRME (87 aa). Glu1411 is a binding site for Ca(2+). A helical transmembrane segment spans residues 1438–1462; the sequence is MSIFYVVYFVVFPFFFVNIFVALII. Residues 1463-1518 are Cytoplasmic-facing; the sequence is ITFQEQGDKMMEEYSLEKNERACIDFAISAKPLTRHMPQNKQSFQYRMWQFVVSPP. The stretch at 1502–1765 is one IV repeat; it reads NKQSFQYRMW…LFVAVIMDNF (264 aa). Residues 1519-1537 form a helical membrane-spanning segment; that stretch reads FEYTIMAMIALNTIVLMMK. Over 1538–1551 the chain is Extracellular; the sequence is FYGASVAYENALRV. Residues 1552-1573 traverse the membrane as a helical segment; sequence FNIVFTSLFSLECVLKVMAFGI. The Cytoplasmic segment spans residues 1574-1580; the sequence is LNYFRDA. The helical transmembrane segment at 1581-1600 threads the bilayer; that stretch reads WNIFDFVTVLGSITDILVTE. Residues 1601-1607 are Extracellular-facing; that stretch reads FGNNFIN. N-linked (GlcNAc...) asparagine glycosylation occurs at Asn1607. The helical transmembrane segment at 1608 to 1626 threads the bilayer; it reads LSFLRLFRAARLIKLLRQG. At 1627 to 1645 the chain is on the cytoplasmic side; the sequence is YTIRILLWTFVQSFKALPY. Residues 1646–1665 form a helical membrane-spanning segment; the sequence is VCLLIAMLFFIYAIIGMQVF. Residues 1666–1737 are Extracellular-facing; the sequence is GNIGIDGEDE…ILTADCGNEF (72 aa). A helical transmembrane segment spans residues 1738-1763; sequence AYFYFVSFIFLCSFLMLNLFVAVIMD. At 1764 to 2368 the chain is on the cytoplasmic side; the sequence is NFEYLTRDSS…AYSESEDDWC (605 aa). Residue Thr1935 is modified to Phosphothreonine. Residues 1940–2368 are disordered; sequence QRMEPPSPTQ…AYSESEDDWC (429 aa). 2 stretches are compositionally biased toward polar residues: residues 1948-1963 and 1981-1997; these read TQEGGPSQNALPSTQL and SWVTQRAQEMFQKTGTW. 6 positions are modified to phosphoserine: Ser1998, Ser2016, Ser2028, Ser2030, Ser2071, and Ser2091. Positions 2008–2017 are enriched in polar residues; it reads PNSQPNSQSV. Positions 2018-2034 are enriched in basic and acidic residues; the sequence is EMREMGTDGYSDSEHYL. The span at 2063–2073 shows a compositional bias: polar residues; the sequence is DLSTISDTSPM. 2 stretches are compositionally biased toward basic and acidic residues: residues 2085-2102 and 2143-2153; these read RRLDDYSLERVPPEENQR and PSKDRDQDRGR. Over residues 2154-2172 the composition is skewed to basic residues; sequence PKDRKHRPHHHHHHHHHHP. Residues 2173 to 2209 show a composition bias toward basic and acidic residues; it reads PAPDRDRYAQERPDTGRARAREQRWSRSPSEGREHTT. Low complexity predominate over residues 2213-2231; sequence GSSSVSGSPAPSTSGTSTP. Positions 2289–2305 are enriched in basic and acidic residues; that stretch reads EGPRPRGADYTEPDSPR.

It belongs to the calcium channel alpha-1 subunit (TC 1.A.1.11) family. CACNA1A subfamily. In terms of assembly, voltage-dependent calcium channels are multisubunit complexes, consisting of alpha-1, alpha-2, beta and delta subunits in a 1:1:1:1 ratio. The channel activity is directed by the pore-forming and voltage-sensitive alpha-1 subunit. In many cases, this subunit is sufficient to generate voltage-sensitive calcium channel activity. The auxiliary subunits beta and alpha-2/delta linked by a disulfide bridge regulate the channel activity. Interacts with CABP1. Interacts with the spider omega-agatoxin-IVA (AC P30288). Interacts with TSPOAP1. Brain specific; mainly found in the cerebellum, olfactory bulb, cerebral cortex, hippocampus, and inferior colliculus. In the hippocampus, expression occurs in pyramidal and granule neurons, as well as in interneurons. Purkinje cells contain predominantly P-type VSCC, the Q-type being a prominent calcium current in cerebellar granule cells.

It is found in the cell membrane. It carries out the reaction Ca(2+)(in) = Ca(2+)(out). Its function is as follows. Voltage-sensitive calcium channels (VSCC) mediate the entry of calcium ions into excitable cells and are also involved in a variety of calcium-dependent processes, including muscle contraction, hormone or neurotransmitter release, gene expression, cell motility, cell division and cell death. The isoform alpha-1A gives rise to P and/or Q-type calcium currents. P/Q-type calcium channels belong to the 'high-voltage activated' (HVA) group and are specifically blocked by the spider omega-agatoxin-IVA (AC P54282). They are however insensitive to dihydropyridines (DHP). The sequence is that of Voltage-dependent P/Q-type calcium channel subunit alpha-1A from Mus musculus (Mouse).